We begin with the raw amino-acid sequence, 267 residues long: Cytochrome b (267 aa).

4 helical membrane passes run 33-53 (FGSL…FLAM), 77-98 (WLIR…FIHV), 113-133 (WNIG…GYVL), and 178-198 (FFAF…VHLL). 2 residues coordinate heme b: His83 and His97. Positions 182 and 196 each coordinate heme b. His201 is a binding site for a ubiquinone. The helical transmembrane segment at 226–246 (IKDLLGVILLLMVLMILVLFF) threads the bilayer.

This sequence belongs to the cytochrome b family. The cytochrome bc1 complex contains 11 subunits: 3 respiratory subunits (MT-CYB, CYC1 and UQCRFS1), 2 core proteins (UQCRC1 and UQCRC2) and 6 low-molecular weight proteins (UQCRH/QCR6, UQCRB/QCR7, UQCRQ/QCR8, UQCR10/QCR9, UQCR11/QCR10 and a cleavage product of UQCRFS1). This cytochrome bc1 complex then forms a dimer. Requires heme b as cofactor.

Its subcellular location is the mitochondrion inner membrane. Its function is as follows. Component of the ubiquinol-cytochrome c reductase complex (complex III or cytochrome b-c1 complex) that is part of the mitochondrial respiratory chain. The b-c1 complex mediates electron transfer from ubiquinol to cytochrome c. Contributes to the generation of a proton gradient across the mitochondrial membrane that is then used for ATP synthesis. This chain is Cytochrome b (MT-CYB), found in Abrothrix olivaceus (Olive grass mouse).